Reading from the N-terminus, the 248-residue chain is Adenosylcobinamide-GDP ribazoletransferase (248 aa).

The next 6 helical transmembrane spans lie at 34–54, 58–78, 113–133, 139–159, 185–205, and 227–247; these read LVFA…LFYI, FFPP…LTGG, AVLA…SIPL, ALLL…GSTV, IIYF…LAAA, and DILG…FYLF.

It belongs to the CobS family. Mg(2+) serves as cofactor.

Its subcellular location is the cell membrane. The enzyme catalyses alpha-ribazole + adenosylcob(III)inamide-GDP = adenosylcob(III)alamin + GMP + H(+). It catalyses the reaction alpha-ribazole 5'-phosphate + adenosylcob(III)inamide-GDP = adenosylcob(III)alamin 5'-phosphate + GMP + H(+). It participates in cofactor biosynthesis; adenosylcobalamin biosynthesis; adenosylcobalamin from cob(II)yrinate a,c-diamide: step 7/7. In terms of biological role, joins adenosylcobinamide-GDP and alpha-ribazole to generate adenosylcobalamin (Ado-cobalamin). Also synthesizes adenosylcobalamin 5'-phosphate from adenosylcobinamide-GDP and alpha-ribazole 5'-phosphate. The chain is Adenosylcobinamide-GDP ribazoletransferase from Acetivibrio thermocellus (strain ATCC 27405 / DSM 1237 / JCM 9322 / NBRC 103400 / NCIMB 10682 / NRRL B-4536 / VPI 7372) (Clostridium thermocellum).